Here is a 237-residue protein sequence, read N- to C-terminus: Large ribosomal subunit protein uL1 (237 aa).

The protein belongs to the universal ribosomal protein uL1 family. Part of the 50S ribosomal subunit.

Binds directly to 23S rRNA. The L1 stalk is quite mobile in the ribosome, and is involved in E site tRNA release. Its function is as follows. Protein L1 is also a translational repressor protein, it controls the translation of the L11 operon by binding to its mRNA. The polypeptide is Large ribosomal subunit protein uL1 (Chloroflexus aurantiacus (strain ATCC 29364 / DSM 637 / Y-400-fl)).